A 791-amino-acid polypeptide reads, in one-letter code: KN motif and ankyrin repeat domain-containing protein 3 (791 aa).

Disordered stretches follow at residues 1–37 (MAKF…SVET), 56–181 (RGPA…GPAQ), 254–312 (ATSD…ETRE), 401–425 (GCTE…GDEM), and 463–514 (YESS…GDCE). Residues 25 to 34 (SARSPSSPYS) show a composition bias toward polar residues. Positions 105–125 (LSPGAFPGLSLPPLSPRSLSR) are enriched in low complexity. The segment covering 127–149 (PRVEHTLLETSRRLEQAQARERA) has biased composition (basic and acidic residues). Phosphoserine occurs at positions 151, 159, 163, 166, 167, and 176. Residues 158–180 (RSPRGSGRSSPAPNPALASPGPA) show a composition bias toward low complexity. Positions 180–229 (AQLQLVREQMAAALRRLRELEDQARALPELQEQVRALRAEKARLLAGRVQ) form a coiled coil. Basic and acidic residues-rich tracts occupy residues 254 to 280 (ATSD…RRSE) and 293 to 312 (PDGE…ETRE). The residue at position 279 (S279) is a Phosphoserine. Polar residues predominate over residues 401–410 (GCTEKTTQTE). Residues 485–496 (SSSSGSDDSSGG) are compositionally biased toward low complexity. Basic and acidic residues predominate over residues 505–514 (HNDKDAGDCE). ANK repeat units follow at residues 606–636 (NGNT…DVNH), 640–677 (AGYS…AKAS), 679–708 (TGQT…DVNV), 712–742 (DGAT…DLTI), and 746–775 (EGTS…SNHQ). A compositionally biased stretch (polar residues) spans 772–783 (SNHQGQSSTGSP). The interval 772-791 (SNHQGQSSTGSPTAKECNDK) is disordered.

Functionally, may be involved in the control of cytoskeleton formation by regulating actin polymerization. This chain is KN motif and ankyrin repeat domain-containing protein 3, found in Mus musculus (Mouse).